The chain runs to 319 residues: Thioredoxin reductase 1 (319 aa).

FAD contacts are provided by residues 11 to 14, 40 to 41, Gln-45, Asn-54, Val-87, Cys-145, Asp-288, and 295 to 297; these read SGPA, IA, and RQA. Cys-142 and Cys-145 form a disulfide bridge. A Phosphoserine modification is found at Ser-303.

This sequence belongs to the class-II pyridine nucleotide-disulfide oxidoreductase family. In terms of assembly, homodimer. FAD is required as a cofactor.

It localises to the cytoplasm. It is found in the mitochondrion intermembrane space. The enzyme catalyses [thioredoxin]-dithiol + NADP(+) = [thioredoxin]-disulfide + NADPH + H(+). Its function is as follows. Central component in the thioredoxin system. Reduces thioredoxins 1 and 2. The chain is Thioredoxin reductase 1 (TRR1) from Saccharomyces cerevisiae (strain ATCC 204508 / S288c) (Baker's yeast).